A 500-amino-acid chain; its full sequence is Ribose import ATP-binding protein RbsA (500 aa).

ABC transporter domains lie at L6 to K242 and A252 to N495. Position 38-45 (G38–S45) interacts with ATP.

Belongs to the ABC transporter superfamily. Ribose importer (TC 3.A.1.2.1) family. As to quaternary structure, the complex is composed of an ATP-binding protein (RbsA), two transmembrane proteins (RbsC) and a solute-binding protein (RbsB).

The protein resides in the cell inner membrane. The catalysed reaction is D-ribose(out) + ATP + H2O = D-ribose(in) + ADP + phosphate + H(+). In terms of biological role, part of the ABC transporter complex RbsABC involved in ribose import. Responsible for energy coupling to the transport system. This Vibrio cholerae serotype O1 (strain ATCC 39315 / El Tor Inaba N16961) protein is Ribose import ATP-binding protein RbsA.